Here is a 564-residue protein sequence, read N- to C-terminus: MKVGQPVLQCQTNSEAFGMMQERRSGNYKPNIWKYDFLQSLSSKYDEEKYKTQAERLKEDAKHLFIEAVDLQGKLELVDCIIKVGLASHFKDEIKKALDTIASSIKNDKSDAIKNRYVTALCFRLLRQHGYEVSQAKKSDFLDENGTFLKAKSMDVKGVLELFEASYLALESENILDDAKAFSTTILKDINSATTESNLYKQVVHALELPFHWRVRWFDVKWHIKTFQKDKSINKTLLDLAKVNFNVVQATLQNDLKEISRWWRNLGLIENLKFSRDRLVESFLCTVGLVFEPQYSSFRRWLTKVVIMILVIDDVYDIYGSLEELQHFTNAINRWDTAELEQLPEYMKICFKTLHTITGETAHEMQREKRWDQEQTETHLKKVWADFCRALFVEAKWFNKGYTPSVQEYLKTACISSSGSLLSVHSFFLIMNEGTREMLHFLEKNQEMFYNISLIIRLCNDLGTSVAEQERGDAASSIVCHMREMEVLEEEARSYLKGIIGNYWKKVNEKCFTQSPEMQLFININVNMARVVHNLYQNRDGFGVQDHQNKKQILSLLVHPFKLD.

Residues Asp-313, Asp-317, Thr-464, and Glu-468 each coordinate Mg(2+). The short motif at 313–317 (DDVYD) is the DDXXD motif element.

It belongs to the terpene synthase family. The cofactor is Mg(2+).

It catalyses the reaction (2E,6E)-farnesyl diphosphate = (3E,6E)-alpha-farnesene + diphosphate. Catalyzes the cyclization of farnesyl diphosphate to (E,E)-alpha-farnesene. The protein is Alpha-farnesene synthase (TPS7) of Ricinus communis (Castor bean).